Consider the following 581-residue polypeptide: Bestrophin-1 (581 aa).

Topologically, residues 1–31 (MTVTYSSQVANARLGSFSRLLLCWRGSIYKL) are cytoplasmic. Ca(2+) is bound at residue Ala-10. A helical membrane pass occupies residues 32 to 51 (LYGEFLIFLLCYYIIRFIYR). Topologically, residues 52 to 60 (MALTDEQQV) are extracellular. A helical transmembrane segment spans residues 61 to 82 (IFEKLTLYCDSYIQLIPISFVL). Residues 83–237 (GFYVTLVVTR…DWISVPLVYT (155 aa)) lie on the Cytoplasmic side of the membrane. The chain crosses the membrane as a helical span at residues 238 to 255 (QVVTVAVYSFFLACLVGR). The Extracellular segment spans residues 256–274 (QFLNPAKAYPGHEMDLVVP). Residues 275 to 288 (LFTFLQFFFYAGWL) form a helical membrane-spanning segment. Residues 289–581 (KVAEQLINPF…ALENRDEAHS (293 aa)) lie on the Cytoplasmic side of the membrane. Positions 293, 296, 301, and 304 each coordinate Ca(2+). The interval 416–440 (EGHFHEGHPKNLRGARLDSSDQEDS) is disordered.

The protein belongs to the anion channel-forming bestrophin (TC 1.A.46) family. Calcium-sensitive chloride channel subfamily. In terms of assembly, interacts with YWHAG; this interaction promotes the ligand-gated L-glutamate channel activity leading to the positive regulation of NMDA glutamate receptor activity through the L-glutamate secretion. In terms of processing, phosphorylated (in vitro). Dephosphorylated (in vitro) by PP2A.

The protein resides in the cell membrane. Its subcellular location is the basolateral cell membrane. The enzyme catalyses chloride(in) = chloride(out). The catalysed reaction is hydrogencarbonate(in) = hydrogencarbonate(out). It carries out the reaction 4-aminobutanoate(in) = 4-aminobutanoate(out). It catalyses the reaction L-glutamate(out) = L-glutamate(in). In terms of biological role, ligand-gated anion channel that allows the movement of anions across cell membranes when activated by calcium (Ca2+). Allows the movement of chloride and hydrogencarbonate. Found in a partially open conformation leading to significantly smaller chloride movement. Upon F2R/PAR-1 activation, the sequestered calcium is released into the cytosol of astrocytes, leading to the (Ca2+)-dependent release of L-glutamate into the synaptic cleft that targets the neuronal postsynaptic GRIN2A/NMDAR receptor resulting in the synaptic plasticity regulation. Upon activation of the norepinephrine-alpha-1 adrenergic receptor signaling pathway, transports as well D-serine than L-glutamate in a (Ca2+)-dependent manner, leading to activation of adjacent NMDAR receptors and therefore regulates the heterosynaptic long-term depression and metaplasticity during initial memory acquisition. Releases the 4-aminobutanoate neurotransmitter in a (Ca2+)-dependent manner, and participates in its tonic release from cerebellar glial cells. This is Bestrophin-1 from Sus scrofa (Pig).